Reading from the N-terminus, the 238-residue chain is N-terminal acetyltransferase A complex catalytic subunit ARD1 (238 aa).

One can recognise an N-acetyltransferase domain in the interval 35–195 (YHILSWPEAS…DAYAMKKVLK (161 aa)).

Belongs to the acetyltransferase family. ARD1 subfamily. As to quaternary structure, component of the N-terminal acetyltransferase A (NatA) complex, which is composed of ARD1, NAT1 and NAT5. Can self-associate.

It localises to the cytoplasm. It catalyses the reaction N-terminal glycyl-[protein] + acetyl-CoA = N-terminal N(alpha)-acetylglycyl-[protein] + CoA + H(+). The catalysed reaction is N-terminal L-alanyl-[protein] + acetyl-CoA = N-terminal N(alpha)-acetyl-L-alanyl-[protein] + CoA + H(+). The enzyme catalyses N-terminal L-seryl-[protein] + acetyl-CoA = N-terminal N(alpha)-acetyl-L-seryl-[protein] + CoA + H(+). It carries out the reaction N-terminal L-valyl-[protein] + acetyl-CoA = N-terminal N(alpha)-acetyl-L-valyl-[protein] + CoA + H(+). It catalyses the reaction N-terminal L-cysteinyl-[protein] + acetyl-CoA = N-terminal N(alpha)-acetyl-L-cysteinyl-[protein] + CoA + H(+). The catalysed reaction is N-terminal L-threonyl-[protein] + acetyl-CoA = N-terminal N(alpha)-acetyl-L-threonyl-[protein] + CoA + H(+). In terms of biological role, catalytic component of the NatA N-terminal acetyltransferase, which catalyzes acetylation of proteins beginning with Met-Ser, Met-Gly and Met-Ala. N-acetylation plays a role in normal eukaryotic translation and processing, protect against proteolytic degradation and protein turnover. In Saccharomyces cerevisiae (strain ATCC 204508 / S288c) (Baker's yeast), this protein is N-terminal acetyltransferase A complex catalytic subunit ARD1 (ARD1).